Here is a 506-residue protein sequence, read N- to C-terminus: Glycerol kinase (506 aa).

T14 contributes to the ADP binding site. Positions 14, 15, and 16 each coordinate ATP. T14 provides a ligand contact to sn-glycerol 3-phosphate. R18 contributes to the ADP binding site. Sn-glycerol 3-phosphate is bound by residues R84, E85, and Y136. Residues R84, E85, and Y136 each contribute to the glycerol site. At H232 the chain carries Phosphohistidine; by HPr. D246 lines the sn-glycerol 3-phosphate pocket. Residues D246 and Q247 each contribute to the glycerol site. T268 and G311 together coordinate ADP. Residues T268, G311, Q315, and G412 each contribute to the ATP site. 2 residues coordinate ADP: G412 and N416.

It belongs to the FGGY kinase family. Homotetramer and homodimer (in equilibrium). The phosphoenolpyruvate-dependent sugar phosphotransferase system (PTS), including enzyme I, and histidine-containing protein (HPr) are required for the phosphorylation of His-232, which leads to the activation of the enzyme.

The enzyme catalyses glycerol + ATP = sn-glycerol 3-phosphate + ADP + H(+). Its pathway is polyol metabolism; glycerol degradation via glycerol kinase pathway; sn-glycerol 3-phosphate from glycerol: step 1/1. Activated by phosphorylation and inhibited by fructose 1,6-bisphosphate (FBP). Functionally, key enzyme in the regulation of glycerol uptake and metabolism. Catalyzes the phosphorylation of glycerol to yield sn-glycerol 3-phosphate. The polypeptide is Glycerol kinase (Enterococcus casseliflavus (Enterococcus flavescens)).